The primary structure comprises 164 residues: Small ribosomal subunit protein uS5 (164 aa).

In terms of domain architecture, S5 DRBM spans 10 to 73 (IEERVVAINR…ESAKKNMIEV (64 aa)).

It belongs to the universal ribosomal protein uS5 family. In terms of assembly, part of the 30S ribosomal subunit. Contacts proteins S4 and S8.

Its function is as follows. With S4 and S12 plays an important role in translational accuracy. In terms of biological role, located at the back of the 30S subunit body where it stabilizes the conformation of the head with respect to the body. The sequence is that of Small ribosomal subunit protein uS5 from Streptococcus suis (strain 98HAH33).